A 426-amino-acid chain; its full sequence is Phosphoribosylamine--glycine ligase (426 aa).

The ATP-grasp domain occupies 113–320; the sequence is KSLMTEAKIP…LLELLYRAST (208 aa). 139–200 provides a ligand contact to ATP; sequence LESKSIPIVI…EEFMEGQEAS (62 aa). 2 residues coordinate Mg(2+): Glu-290 and Asn-292.

This sequence belongs to the GARS family. Mg(2+) is required as a cofactor. Mn(2+) serves as cofactor.

The catalysed reaction is 5-phospho-beta-D-ribosylamine + glycine + ATP = N(1)-(5-phospho-beta-D-ribosyl)glycinamide + ADP + phosphate + H(+). Its pathway is purine metabolism; IMP biosynthesis via de novo pathway; N(1)-(5-phospho-D-ribosyl)glycinamide from 5-phospho-alpha-D-ribose 1-diphosphate: step 2/2. The polypeptide is Phosphoribosylamine--glycine ligase (Leptospira interrogans serogroup Icterohaemorrhagiae serovar Lai (strain 56601)).